The primary structure comprises 273 residues: 3-methyl-2-oxobutanoate hydroxymethyltransferase (273 aa).

2 residues coordinate Mg(2+): D49 and D88. 3-methyl-2-oxobutanoate contacts are provided by residues 49-50, D88, and K118; that span reads DS. Residue E120 participates in Mg(2+) binding. Residue E187 is the Proton acceptor of the active site.

The protein belongs to the PanB family. In terms of assembly, homodecamer; pentamer of dimers. Mg(2+) serves as cofactor.

The protein localises to the cytoplasm. It carries out the reaction 3-methyl-2-oxobutanoate + (6R)-5,10-methylene-5,6,7,8-tetrahydrofolate + H2O = 2-dehydropantoate + (6S)-5,6,7,8-tetrahydrofolate. The protein operates within cofactor biosynthesis; (R)-pantothenate biosynthesis; (R)-pantoate from 3-methyl-2-oxobutanoate: step 1/2. Its function is as follows. Catalyzes the reversible reaction in which hydroxymethyl group from 5,10-methylenetetrahydrofolate is transferred onto alpha-ketoisovalerate to form ketopantoate. This chain is 3-methyl-2-oxobutanoate hydroxymethyltransferase, found in Rhizobium etli (strain ATCC 51251 / DSM 11541 / JCM 21823 / NBRC 15573 / CFN 42).